A 1215-amino-acid polypeptide reads, in one-letter code: DNA-directed RNA polymerase subunit beta' (1215 aa).

Positions 60, 62, 75, and 78 each coordinate Zn(2+). D450, D452, and D454 together coordinate Mg(2+). Zn(2+)-binding residues include C818, C892, C899, and C902.

The protein belongs to the RNA polymerase beta' chain family. In terms of assembly, the RNAP catalytic core consists of 2 alpha, 1 beta, 1 beta' and 1 omega subunit. When a sigma factor is associated with the core the holoenzyme is formed, which can initiate transcription. Requires Mg(2+) as cofactor. Zn(2+) is required as a cofactor.

It catalyses the reaction RNA(n) + a ribonucleoside 5'-triphosphate = RNA(n+1) + diphosphate. Functionally, DNA-dependent RNA polymerase catalyzes the transcription of DNA into RNA using the four ribonucleoside triphosphates as substrates. The sequence is that of DNA-directed RNA polymerase subunit beta' from Streptococcus suis (strain 98HAH33).